Consider the following 225-residue polypeptide: Cytidylate kinase (225 aa).

11–19 (GPAAAGKST) provides a ligand contact to ATP.

Belongs to the cytidylate kinase family. Type 1 subfamily.

The protein localises to the cytoplasm. It carries out the reaction CMP + ATP = CDP + ADP. The enzyme catalyses dCMP + ATP = dCDP + ADP. The polypeptide is Cytidylate kinase (Bacillus pumilus (strain SAFR-032)).